A 57-amino-acid polypeptide reads, in one-letter code: MFSSRKRRVAKRAFNAKSKKFPIGEVVSTRKRLKQNTNTPPHYDTSEDEDEDNYYNY.

Residues 26-57 form a disordered region; sequence VVSTRKRLKQNTNTPPHYDTSEDEDEDNYYNY. Positions 46–57 are enriched in acidic residues; the sequence is SEDEDEDNYYNY.

This is an uncharacterized protein from Autographa californica nuclear polyhedrosis virus (AcMNPV).